Reading from the N-terminus, the 92-residue chain is Small ribosomal subunit protein uS19c (92 aa).

Belongs to the universal ribosomal protein uS19 family.

It localises to the plastid. The protein resides in the chloroplast. In terms of biological role, protein S19 forms a complex with S13 that binds strongly to the 16S ribosomal RNA. The protein is Small ribosomal subunit protein uS19c of Chara vulgaris (Common stonewort).